Reading from the N-terminus, the 127-residue chain is KP4 killer toxin (127 aa).

An N-terminal signal peptide occupies residues 1-22 (MQIINVVYSFLFAAAMLPVVHS). Intrachain disulfides connect Cys27–Cys100, Cys33–Cys103, Cys49–Cys89, Cys57–Cys82, and Cys66–Cys127.

As to quaternary structure, monomer.

It localises to the secreted. Its function is as follows. This protein is lethal to sensitive cells of the same or related species. It specifically inhibits voltage-gated calcium channels. It inhibits cell growth and division by blocking calcium import. The chain is KP4 killer toxin (M2A) from Mycosarcoma maydis (Corn smut fungus).